A 640-amino-acid polypeptide reads, in one-letter code: Chaperone protein HtpG (640 aa).

An a; substrate-binding region spans residues 1–343; that stretch reads MQTAENIEHL…SSDLPLNVSR (343 aa). The tract at residues 344-564 is b; the sequence is EILQESKDID…THDVSGNLGR (221 aa). A c region spans residues 565–640; that stretch reads LLKSAGQKVP…LLLQNILSGK (76 aa).

This sequence belongs to the heat shock protein 90 family. Homodimer.

The protein resides in the cytoplasm. In terms of biological role, molecular chaperone. Has ATPase activity. The polypeptide is Chaperone protein HtpG (Nitrosomonas europaea (strain ATCC 19718 / CIP 103999 / KCTC 2705 / NBRC 14298)).